Here is a 294-residue protein sequence, read N- to C-terminus: Putative deoxyribonuclease TATDN3 (294 aa).

Zn(2+)-binding residues include His-9, His-11, Glu-104, His-144, His-167, and Asp-215.

Belongs to the metallo-dependent hydrolases superfamily. TatD-type hydrolase family. It depends on Mn(2+) as a cofactor. Requires Ca(2+) as cofactor. The cofactor is Mg(2+). Zn(2+) is required as a cofactor.

The protein resides in the nucleus. The 3'-exonuclease activity is sensitive to the metal ion present in the active site, whereas the AP endodeoxyribonuclease activity is observed in a variety of divalent metal cofactors. 3'-exoxonuclease activity is suppressed in the presence of Ca(2+), Zn(2+) and Ni(2+). Exhibits 3'-exonuclease activities and apurinic/apyrimidinic (AP) endonuclease (in vitro). Show preferential AP endonuclease activity on double-stranded DNA substrates and 3'- exonuclease activity on single-stranded DNA. This is Putative deoxyribonuclease TATDN3 (Tatdn3) from Mus musculus (Mouse).